A 259-amino-acid polypeptide reads, in one-letter code: Small ribosomal subunit protein eS1 (259 aa).

Basic residues predominate over residues 1–18 (MAVGKNKRISKGKKGGKK). Positions 1–22 (MAVGKNKRISKGKKGGKKKASD) are disordered.

It belongs to the eukaryotic ribosomal protein eS1 family. As to quaternary structure, component of the small ribosomal subunit. Mature ribosomes consist of a small (40S) and a large (60S) subunit. The 40S subunit contains about 33 different proteins and 1 molecule of RNA (18S). The 60S subunit contains about 49 different proteins and 3 molecules of RNA (25S, 5.8S and 5S).

The protein localises to the cytoplasm. This chain is Small ribosomal subunit protein eS1, found in Chlamydomonas reinhardtii (Chlamydomonas smithii).